An 822-amino-acid polypeptide reads, in one-letter code: A disintegrin and metallopeptidase domain 3 (822 aa).

The first 16 residues, 1 to 16 (MLPLFLVLSYLGQVIA), serve as a signal peptide directing secretion. The Peptidase M12B domain maps to 187-384 (RILRIKIIMD…PELDCLRNTS (198 aa)). Disulfide bonds link Cys-296–Cys-379, Cys-338–Cys-363, Cys-340–Cys-345, Cys-456–Cys-476, Cys-623–Cys-635, Cys-629–Cys-641, and Cys-643–Cys-652. Residues 395 to 484 (GSYCGNHLLE…GCAPDTKAAD (90 aa)) form the Disintegrin domain. Positions 619 to 653 (GTRECEADDKCQGHGICNNLNNCQCESGFAPPECD) constitute an EGF-like domain. The helical transmembrane segment at 689–709 (VLLISFYILLPFLVVLAFMAV) threads the bilayer.

Interacts with LY6K. Interacts with TEX101. In terms of processing, initially synthesized as a 110-kDa precursor in round spermatids, and the precursor is then processed into a 42-kDa mature protein during the sperm transport into and/or once in the epididymis. In terms of tissue distribution, expressed in sperm (at protein level).

The protein localises to the cell membrane. Its function is as follows. Involved in fertilization by controlling sperm migration into the oviduct. Promotes the binding of sperm to the oocyte zona pellucida. The protein is A disintegrin and metallopeptidase domain 3 of Mus musculus (Mouse).